The sequence spans 326 residues: Protein SEH1 (326 aa).

WD repeat units follow at residues 7–46, 54–95, 105–146, 224–266, and 278–317; these read TLDS…SSTF, VSES…AHGL, NKSS…ELKN, DKGD…DLEG, and GHQG…EWHE.

This sequence belongs to the WD repeat SEC13 family. Part of the nuclear pore complex (NPC). The NPC has an eight-fold symmetrical structure comprising a central transport channel and two rings, the cytoplasmic and nuclear rings, to which eight filaments are attached. The cytoplasmic filaments have loose ends, while the nuclear filaments are joined in a distal ring, forming a nuclear basket. NPCs are highly dynamic in configuration and composition, and can be devided in 3 subcomplexes, the NUP62 subcomplex, the NUP107-160 subcomplex and the NUP93 subcomplex, containing approximately 30 different nucleoporin proteins.

Its subcellular location is the nucleus envelope. It localises to the nucleus. It is found in the cytoplasm. The protein localises to the nuclear pore complex. Functionally, required for proper export of mRNAs from the nucleus to the cytoplasm. This Arabidopsis thaliana (Mouse-ear cress) protein is Protein SEH1.